We begin with the raw amino-acid sequence, 144 residues long: Large ribosomal subunit protein uL14 (144 aa).

This sequence belongs to the universal ribosomal protein uL14 family. As to quaternary structure, part of the 50S ribosomal subunit. Forms a cluster with proteins L3 and L24e, part of which may contact the 16S rRNA in 2 intersubunit bridges.

In terms of biological role, binds to 23S rRNA. Forms part of two intersubunit bridges in the 70S ribosome. This Pyrobaculum arsenaticum (strain DSM 13514 / JCM 11321 / PZ6) protein is Large ribosomal subunit protein uL14.